Here is a 572-residue protein sequence, read N- to C-terminus: Proline--tRNA ligase (572 aa).

This sequence belongs to the class-II aminoacyl-tRNA synthetase family. ProS type 1 subfamily. As to quaternary structure, homodimer.

The protein localises to the cytoplasm. The enzyme catalyses tRNA(Pro) + L-proline + ATP = L-prolyl-tRNA(Pro) + AMP + diphosphate. Catalyzes the attachment of proline to tRNA(Pro) in a two-step reaction: proline is first activated by ATP to form Pro-AMP and then transferred to the acceptor end of tRNA(Pro). As ProRS can inadvertently accommodate and process non-cognate amino acids such as alanine and cysteine, to avoid such errors it has two additional distinct editing activities against alanine. One activity is designated as 'pretransfer' editing and involves the tRNA(Pro)-independent hydrolysis of activated Ala-AMP. The other activity is designated 'posttransfer' editing and involves deacylation of mischarged Ala-tRNA(Pro). The misacylated Cys-tRNA(Pro) is not edited by ProRS. This is Proline--tRNA ligase from Yersinia pestis (strain Pestoides F).